A 125-amino-acid polypeptide reads, in one-letter code: UPF0231 protein HD_1708 (125 aa).

It belongs to the UPF0231 family.

The protein is UPF0231 protein HD_1708 of Haemophilus ducreyi (strain 35000HP / ATCC 700724).